The sequence spans 105 residues: U2-lycotoxin-Ls1b (105 aa).

An N-terminal signal peptide occupies residues 1–17 (MIKYVLISALLVVAVYS). Positions 18–41 (FTIEDNEDALLEEAEDELDTEEER) are excised as a propeptide. 4 disulfides stabilise this stretch: Cys-51-Cys-67, Cys-58-Cys-97, Cys-60-Cys-83, and Cys-69-Cys-81.

Belongs to the neurotoxin 04 (omega-agtx) family. 01 (type I omega-agtx) subfamily. In terms of tissue distribution, expressed by the venom gland.

The protein localises to the secreted. In terms of biological role, insecticidal to house crickets. It induces an excitatory slow-onset impact that leads to irreversible spastic paralysis. It also modifies human voltage-gated potassium channel Kv1.5/KCNA5. Most likely, it binds to the voltage-sensing domain of the channel, suggesting it does not block the pore but prevents its opening at physiological membrane potentials. The recombinant peptide binds to the channel in an irreversible manner and slows down the hKv1.5 current activation kinetics. It is not toxic to mice, when intracranially injected (at 0.5 ug/g mouse). This is U2-lycotoxin-Ls1b from Lycosa singoriensis (Wolf spider).